The sequence spans 111 residues: uncharacterized protein (111 aa).

This is an uncharacterized protein from Escherichia coli (Bacteriophage T4).